The chain runs to 343 residues: NADH-cytochrome b5 reductase 2 (343 aa).

The helical transmembrane segment at 41-61 (ILLGAAAVGLAGAGAYFFSGA) threads the bilayer. The FAD-binding FR-type domain occupies 92–197 (QGWLSLKLEE…KGPLPKYPWE (106 aa)). 200–235 (KHKHIALVAGGTGITPMYQLIRAIFNNPDDKTKVTL) contacts FAD.

It belongs to the flavoprotein pyridine nucleotide cytochrome reductase family. The cofactor is FAD.

It is found in the mitochondrion outer membrane. It catalyses the reaction 2 Fe(III)-[cytochrome b5] + NADH = 2 Fe(II)-[cytochrome b5] + NAD(+) + H(+). Functionally, may mediate the reduction of outer membrane cytochrome b5. In Neurospora crassa (strain ATCC 24698 / 74-OR23-1A / CBS 708.71 / DSM 1257 / FGSC 987), this protein is NADH-cytochrome b5 reductase 2 (mcr-1).